Reading from the N-terminus, the 308-residue chain is Small ribosomal subunit protein uS5c (308 aa).

A chloroplast-targeting transit peptide spans 1–55 (MATTATTTPSATSLTTLHRRIPLFPTTTTLLSLSSSSKPLFLSLSSTRSFPTHLY). Residues 152-215 (FEENVVQVRR…VDARRNIITV (64 aa)) enclose the S5 DRBM domain.

As to quaternary structure, component of the chloroplast small ribosomal subunit (SSU). Mature 70S chloroplast ribosomes of higher plants consist of a small (30S) and a large (50S) subunit. The 30S small subunit contains 1 molecule of ribosomal RNA (16S rRNA) and 24 different proteins. The 50S large subunit contains 3 rRNA molecules (23S, 5S and 4.5S rRNA) and 33 different proteins. uS5c binds directly to 16S ribosomal RNA.

Its subcellular location is the plastid. It localises to the chloroplast. In terms of biological role, component of the chloroplast ribosome (chloro-ribosome), a dedicated translation machinery responsible for the synthesis of chloroplast genome-encoded proteins, including proteins of the transcription and translation machinery and components of the photosynthetic apparatus. This Spinacia oleracea (Spinach) protein is Small ribosomal subunit protein uS5c (rps5).